Consider the following 405-residue polypeptide: Homocitrate synthase AksA (405 aa).

Residues 23–274 (IEICDVTLRD…IERYDTTKLN (252 aa)) form the Pyruvate carboxyltransferase domain.

Belongs to the alpha-IPM synthase/homocitrate synthase family.

It catalyses the reaction acetyl-CoA + 2-oxoglutarate + H2O = (2R)-homocitrate + CoA + H(+). The catalysed reaction is 2-oxoadipate + acetyl-CoA + H2O = (R)-dihomocitrate + CoA + H(+). It carries out the reaction 2-oxoheptanedioate + acetyl-CoA + H2O = (R)-trihomocitrate + CoA + H(+). The protein operates within organic acid metabolism; 2-oxosuberate biosynthesis. Its function is as follows. Catalyzes the condensation of alpha-ketoglutarate and acetyl-CoA to form (R)-homocitrate. Can also catalyze the condensation of alpha-ketoadipate with acetyl-CoA to form (R)-homo(2)citrate, and the condensation of alpha-ketopimelate with acetyl-CoA to form (R)-homo(3)citrate. These reactions are part of the biosynthesis pathway of coenzyme B and biotin. In Methanosarcina mazei (strain ATCC BAA-159 / DSM 3647 / Goe1 / Go1 / JCM 11833 / OCM 88) (Methanosarcina frisia), this protein is Homocitrate synthase AksA (aksA).